Reading from the N-terminus, the 228-residue chain is Lipoprotein-releasing system ATP-binding protein LolD (228 aa).

The 223-residue stretch at 6 to 228 (LRCKELSKSY…KNGILHKEQG (223 aa)) folds into the ABC transporter domain. Residue 42–49 (GASGSGKS) coordinates ATP.

It belongs to the ABC transporter superfamily. Lipoprotein translocase (TC 3.A.1.125) family. As to quaternary structure, the complex is composed of two ATP-binding proteins (LolD) and two transmembrane proteins (LolC and LolE).

Its subcellular location is the cell inner membrane. Functionally, part of the ABC transporter complex LolCDE involved in the translocation of mature outer membrane-directed lipoproteins, from the inner membrane to the periplasmic chaperone, LolA. Responsible for the formation of the LolA-lipoprotein complex in an ATP-dependent manner. In Idiomarina loihiensis (strain ATCC BAA-735 / DSM 15497 / L2-TR), this protein is Lipoprotein-releasing system ATP-binding protein LolD.